The following is a 214-amino-acid chain: dITP/XTP pyrophosphatase (214 aa).

13-18 provides a ligand contact to substrate; the sequence is SHNKGK. Glutamate 45 and aspartate 74 together coordinate Mg(2+). Catalysis depends on aspartate 74, which acts as the Proton acceptor. Residues serine 75, 163–166, lysine 186, and 199–200 contribute to the substrate site; these read FGYD and HR.

Belongs to the HAM1 NTPase family. As to quaternary structure, homodimer. It depends on Mg(2+) as a cofactor.

It carries out the reaction XTP + H2O = XMP + diphosphate + H(+). The enzyme catalyses dITP + H2O = dIMP + diphosphate + H(+). The catalysed reaction is ITP + H2O = IMP + diphosphate + H(+). Its function is as follows. Pyrophosphatase that catalyzes the hydrolysis of nucleoside triphosphates to their monophosphate derivatives, with a high preference for the non-canonical purine nucleotides XTP (xanthosine triphosphate), dITP (deoxyinosine triphosphate) and ITP. Seems to function as a house-cleaning enzyme that removes non-canonical purine nucleotides from the nucleotide pool, thus preventing their incorporation into DNA/RNA and avoiding chromosomal lesions. The polypeptide is dITP/XTP pyrophosphatase (Agrobacterium fabrum (strain C58 / ATCC 33970) (Agrobacterium tumefaciens (strain C58))).